Consider the following 164-residue polypeptide: Cyclic pyranopterin monophosphate synthase (164 aa).

Substrate is bound by residues 75 to 77 and 116 to 117; these read MCH and ME. Residue D131 is part of the active site.

The protein belongs to the MoaC family. In terms of assembly, homohexamer; trimer of dimers.

It catalyses the reaction (8S)-3',8-cyclo-7,8-dihydroguanosine 5'-triphosphate = cyclic pyranopterin phosphate + diphosphate. Its pathway is cofactor biosynthesis; molybdopterin biosynthesis. Its function is as follows. Catalyzes the conversion of (8S)-3',8-cyclo-7,8-dihydroguanosine 5'-triphosphate to cyclic pyranopterin monophosphate (cPMP). The sequence is that of Cyclic pyranopterin monophosphate synthase from Staphylococcus aureus (strain bovine RF122 / ET3-1).